A 644-amino-acid chain; its full sequence is Probable potassium transport system protein Kup 2 (644 aa).

A disordered region spans residues 1–21 (MSSDAAAVADRDGSSPGHGGH). Helical transmembrane passes span 26 to 46 (LGAM…TSPL), 69 to 89 (VLSL…VAII), 120 to 140 (IILL…ITPA), 155 to 175 (AGFA…LFMI), 183 to 203 (VGML…VLGT), 231 to 251 (LAFL…ALYA), 265 to 285 (WLVF…AMIL), 312 to 332 (LVIL…TGAF), 360 to 380 (IYIP…VMSF), 390 to 410 (YGIA…VVLI), 419 to 439 (LAAP…GANL), and 444 to 464 (DGGW…TTWG).

This sequence belongs to the HAK/KUP transporter (TC 2.A.72) family.

The protein resides in the cell inner membrane. The enzyme catalyses K(+)(in) + H(+)(in) = K(+)(out) + H(+)(out). Its function is as follows. Transport of potassium into the cell. Likely operates as a K(+):H(+) symporter. The chain is Probable potassium transport system protein Kup 2 from Rhizorhabdus wittichii (strain DSM 6014 / CCUG 31198 / JCM 15750 / NBRC 105917 / EY 4224 / RW1) (Sphingomonas wittichii).